The chain runs to 101 residues: Protein S100-A11 (101 aa).

EF-hand domains lie at isoleucine 13–serine 48 and lysine 54–alanine 89. Asparagine 30, lysine 32, glutamate 37, aspartate 67, asparagine 69, aspartate 71, glutamine 73, and glutamate 78 together coordinate Ca(2+).

Belongs to the S-100 family. Homodimer; disulfide-linked. Smooth muscle and non-muscle tissues.

The protein is Protein S100-A11 (S100A11) of Gallus gallus (Chicken).